We begin with the raw amino-acid sequence, 357 residues long: Tetraacyldisaccharide 4'-kinase (357 aa).

49 to 56 contacts ATP; the sequence is TIGGTGKT.

It belongs to the LpxK family.

It catalyses the reaction a lipid A disaccharide + ATP = a lipid IVA + ADP + H(+). It participates in glycolipid biosynthesis; lipid IV(A) biosynthesis; lipid IV(A) from (3R)-3-hydroxytetradecanoyl-[acyl-carrier-protein] and UDP-N-acetyl-alpha-D-glucosamine: step 6/6. Transfers the gamma-phosphate of ATP to the 4'-position of a tetraacyldisaccharide 1-phosphate intermediate (termed DS-1-P) to form tetraacyldisaccharide 1,4'-bis-phosphate (lipid IVA). This Porphyromonas gingivalis (strain ATCC 33277 / DSM 20709 / CIP 103683 / JCM 12257 / NCTC 11834 / 2561) protein is Tetraacyldisaccharide 4'-kinase.